Consider the following 232-residue polypeptide: Ubiquinone biosynthesis O-methyltransferase (232 aa).

S-adenosyl-L-methionine contacts are provided by arginine 36, glycine 55, aspartate 76, and methionine 120.

This sequence belongs to the methyltransferase superfamily. UbiG/COQ3 family.

The catalysed reaction is a 3-demethylubiquinol + S-adenosyl-L-methionine = a ubiquinol + S-adenosyl-L-homocysteine + H(+). It catalyses the reaction a 3-(all-trans-polyprenyl)benzene-1,2-diol + S-adenosyl-L-methionine = a 2-methoxy-6-(all-trans-polyprenyl)phenol + S-adenosyl-L-homocysteine + H(+). It functions in the pathway cofactor biosynthesis; ubiquinone biosynthesis. In terms of biological role, O-methyltransferase that catalyzes the 2 O-methylation steps in the ubiquinone biosynthetic pathway. The sequence is that of Ubiquinone biosynthesis O-methyltransferase from Thiobacillus denitrificans (strain ATCC 25259 / T1).